The primary structure comprises 370 residues: Protein-tyrosine sulfotransferase 1 (370 aa).

The Cytoplasmic portion of the chain corresponds to 1-8; sequence MVGKLKQN. A helical; Signal-anchor for type II membrane protein membrane pass occupies residues 9 to 25; sequence LLLACLVISSVTVFYLG. Topologically, residues 26-370 are lumenal; sequence QHAMECHHRI…KEKPQTEQVE (345 aa). Asn-60 carries N-linked (GlcNAc...) asparagine glycosylation. 79 to 83 serves as a coordination point for 3'-phosphoadenylyl sulfate; it reads RSGTT. Cysteines 97 and 157 form a disulfide. Glu-100 serves as the catalytic Proton donor/acceptor. An interaction with peptide substrate region spans residues 102–106; that stretch reads RVIPR. 3'-phosphoadenylyl sulfate is bound by residues Arg-184, Ser-192, and Arg-196. An intrachain disulfide couples Cys-226 to Cys-234. Residue Tyr-239 coordinates 3'-phosphoadenylyl sulfate. The N-linked (GlcNAc...) asparagine glycan is linked to Asn-262. 3'-phosphoadenylyl sulfate is bound by residues 286 to 295 and Lys-301; that span reads STDQVIKPVN.

Belongs to the protein sulfotransferase family. In terms of assembly, homodimer. Can also form heterodimers with TPST2. In terms of processing, N-glycosylated. As to expression, ubiquitous. Detected in heart, brain, placenta, lung, liver, skeletal muscle, kidney and pancreas.

It localises to the golgi apparatus membrane. The enzyme catalyses L-tyrosyl-[protein] + 3'-phosphoadenylyl sulfate = O-sulfo-L-tyrosine-[protein] + adenosine 3',5'-bisphosphate + H(+). In terms of biological role, catalyzes the O-sulfation of tyrosine residues within acidic motifs of polypeptides, using 3'-phosphoadenylyl sulfate (PAPS) as cosubstrate. In Homo sapiens (Human), this protein is Protein-tyrosine sulfotransferase 1 (TPST1).